A 226-amino-acid chain; its full sequence is 7-cyano-7-deazaguanine synthase (226 aa).

ATP is bound at residue 8 to 18; that stretch reads LSGGLDSTTVL. 4 residues coordinate Zn(2+): cysteine 190, cysteine 198, cysteine 201, and cysteine 204.

This sequence belongs to the QueC family. As to quaternary structure, homodimer. Zn(2+) serves as cofactor.

The enzyme catalyses 7-carboxy-7-deazaguanine + NH4(+) + ATP = 7-cyano-7-deazaguanine + ADP + phosphate + H2O + H(+). Its pathway is purine metabolism; 7-cyano-7-deazaguanine biosynthesis. Functionally, catalyzes the ATP-dependent conversion of 7-carboxy-7-deazaguanine (CDG) to 7-cyano-7-deazaguanine (preQ(0)). This is 7-cyano-7-deazaguanine synthase from Clostridium kluyveri (strain ATCC 8527 / DSM 555 / NBRC 12016 / NCIMB 10680 / K1).